Consider the following 353-residue polypeptide: Phospho-N-acetylmuramoyl-pentapeptide-transferase (353 aa).

10 consecutive transmembrane segments (helical) span residues 24–44, 66–86, 88–108, 129–149, 160–180, 192–212, 229–249, 256–276, 281–301, and 330–350; these read LGFF…ILWA, TPTM…LLCA, LGNP…FVGF, FGML…KGLD, PLFE…FLSA, GLAS…VYVA, VGEL…FLWY, VFMG…NAIV, ILLV…ILQV, and KVIV…LLSL.

It belongs to the glycosyltransferase 4 family. MraY subfamily. Mg(2+) serves as cofactor.

The protein resides in the cell inner membrane. It carries out the reaction UDP-N-acetyl-alpha-D-muramoyl-L-alanyl-gamma-D-glutamyl-meso-2,6-diaminopimeloyl-D-alanyl-D-alanine + di-trans,octa-cis-undecaprenyl phosphate = di-trans,octa-cis-undecaprenyl diphospho-N-acetyl-alpha-D-muramoyl-L-alanyl-D-glutamyl-meso-2,6-diaminopimeloyl-D-alanyl-D-alanine + UMP. Its pathway is cell wall biogenesis; peptidoglycan biosynthesis. Catalyzes the initial step of the lipid cycle reactions in the biosynthesis of the cell wall peptidoglycan: transfers peptidoglycan precursor phospho-MurNAc-pentapeptide from UDP-MurNAc-pentapeptide onto the lipid carrier undecaprenyl phosphate, yielding undecaprenyl-pyrophosphoryl-MurNAc-pentapeptide, known as lipid I. The sequence is that of Phospho-N-acetylmuramoyl-pentapeptide-transferase from Helicobacter acinonychis (strain Sheeba).